The primary structure comprises 132 residues: Large ribosomal subunit protein bL17 (132 aa).

It belongs to the bacterial ribosomal protein bL17 family. In terms of assembly, part of the 50S ribosomal subunit. Contacts protein L32.

This chain is Large ribosomal subunit protein bL17, found in Ruthia magnifica subsp. Calyptogena magnifica.